Consider the following 148-residue polypeptide: Glutamyl-tRNA(Gln) amidotransferase subunit C, mitochondrial (148 aa).

The protein belongs to the GatC family. In terms of assembly, subunit of the heterotrimeric GatCAB amidotransferase (AdT) complex, composed of A, B and C subunits.

It is found in the mitochondrion. It carries out the reaction L-glutamyl-tRNA(Gln) + L-glutamine + ATP + H2O = L-glutaminyl-tRNA(Gln) + L-glutamate + ADP + phosphate + H(+). In terms of biological role, allows the formation of correctly charged Gln-tRNA(Gln) through the transamidation of misacylated Glu-tRNA(Gln) in the mitochondria. The reaction takes place in the presence of glutamine and ATP through an activated gamma-phospho-Glu-tRNA(Gln). The protein is Glutamyl-tRNA(Gln) amidotransferase subunit C, mitochondrial of Drosophila simulans (Fruit fly).